The following is a 125-amino-acid chain: Oxytocin-neurophysin 1 (125 aa).

The N-terminal stretch at 1–19 (MAGPSLACCLLGLLALTSA) is a signal peptide. A disulfide bridge connects residues C20 and C25. G28 is modified (glycine amide). Intrachain disulfides connect C41-C85, C44-C58, C52-C75, C59-C65, C92-C104, C98-C116, and C105-C110.

This sequence belongs to the vasopressin/oxytocin family. Interacts with oxytocin receptor (Ki=1.5 nM). Interacts with vasopressin V1aR/AVPR1A (Ki=37 nM), V1bR/AVPR1B (Ki=222 nM), and V2R/AVPR2 receptors (Ki=823 nM).

In terms of biological role, neurophysin 1 specifically binds oxytocin. Functionally, oxytocin causes contraction of the smooth muscle of the uterus and of the mammary gland. Acts by binding to oxytocin receptor (OXTR). This is Oxytocin-neurophysin 1 (OXT) from Sus scrofa (Pig).